A 241-amino-acid chain; its full sequence is 1-(5-phosphoribosyl)-5-[(5-phosphoribosylamino)methylideneamino] imidazole-4-carboxamide isomerase (241 aa).

D12 serves as the catalytic Proton acceptor. Residue D133 is the Proton donor of the active site.

Belongs to the HisA/HisF family.

It is found in the cytoplasm. The catalysed reaction is 1-(5-phospho-beta-D-ribosyl)-5-[(5-phospho-beta-D-ribosylamino)methylideneamino]imidazole-4-carboxamide = 5-[(5-phospho-1-deoxy-D-ribulos-1-ylimino)methylamino]-1-(5-phospho-beta-D-ribosyl)imidazole-4-carboxamide. It functions in the pathway amino-acid biosynthesis; L-histidine biosynthesis; L-histidine from 5-phospho-alpha-D-ribose 1-diphosphate: step 4/9. The polypeptide is 1-(5-phosphoribosyl)-5-[(5-phosphoribosylamino)methylideneamino] imidazole-4-carboxamide isomerase (Persephonella marina (strain DSM 14350 / EX-H1)).